An 801-amino-acid chain; its full sequence is Transducin beta-like protein 3 (801 aa).

At Ala2 the chain carries N-acetylalanine. 13 WD repeats span residues 64 to 105 (EDQE…RLWK), 107 to 146 (IHTAPVASMAFDATSTLLATGGCDGAVRVWDIVQHYGTHH), 149 to 190 (GSPG…CLAV), 193 to 232 (AHYSAVTSLSFSEGGHTMLSSGRDKICIVWDLQSYQTTRT), 245 to 284 (LPEQPAPALGVKSSGLHFLTAGDQGILRVWEAASGQCVYT), 290 to 329 (GLRQELTHCTLARAADLLLTVTADHNLLLYEAHSLQLQKQ), 332 to 372 (GYSE…CQIL), 374 to 413 (GHTDIVLALDVFRKGWLFASCAKDQSIRIWKMNKAGQVAC), 419 to 459 (GHTH…LAKS), 477 to 516 (CHDKDINSLAVSPNDKLLATGSQDRTAKLWALPQCQLLGV), 519 to 560 (GHRR…KTFE), 562 to 602 (HDAS…RTLD), and 604 to 642 (HEDKVWGLHCSQLDDHAITGGSDSRIILWKDVTEAEQAE). Ser257 carries the phosphoserine modification. A Glycyl lysine isopeptide (Lys-Gly) (interchain with G-Cter in SUMO2) cross-link involves residue Lys407.

Part of the small subunit (SSU) processome, composed of more than 70 proteins and the RNA chaperone small nucleolar RNA (snoRNA) U3.

The protein resides in the nucleus. It is found in the nucleolus. In terms of biological role, part of the small subunit (SSU) processome, first precursor of the small eukaryotic ribosomal subunit. During the assembly of the SSU processome in the nucleolus, many ribosome biogenesis factors, an RNA chaperone and ribosomal proteins associate with the nascent pre-rRNA and work in concert to generate RNA folding, modifications, rearrangements and cleavage as well as targeted degradation of pre-ribosomal RNA by the RNA exosome. The sequence is that of Transducin beta-like protein 3 (Tbl3) from Mus musculus (Mouse).